A 406-amino-acid polypeptide reads, in one-letter code: Gustatory receptor for sugar taste 64b (406 aa).

Topologically, residues Met1–Leu47 are cytoplasmic. A helical membrane pass occupies residues Tyr48–Ile68. The Extracellular segment spans residues Lys69–Thr79. The helical transmembrane segment at Leu80 to Trp100 threads the bilayer. Residues Pro101–Arg130 are Cytoplasmic-facing. The helical transmembrane segment at Ile131 to Gly151 threads the bilayer. The Extracellular portion of the chain corresponds to Asn152–Tyr183. Asn167 carries an N-linked (GlcNAc...) asparagine glycan. Residues Met184–Ala204 form a helical membrane-spanning segment. Over Tyr205–Ala265 the chain is Cytoplasmic. A helical transmembrane segment spans residues Ile266 to Phe286. The Extracellular portion of the chain corresponds to Asn287–Lys290. The chain crosses the membrane as a helical span at residues Asn291–Val311. At Arg312–Arg370 the chain is on the cytoplasmic side. Residues Ser371–Ile391 traverse the membrane as a helical segment. Over Asn392–Tyr406 the chain is Extracellular.

The protein belongs to the insect chemoreceptor superfamily. Gustatory receptor (GR) family. Gr5a subfamily. Expressed in Gr5a-expressing sugar-sensing cells.

The protein localises to the cell membrane. Its function is as follows. One of the few identified sugar gustatory receptors identified so far and which promotes the starvation-induced increase of feeding motivation. The sequence is that of Gustatory receptor for sugar taste 64b (Gr64b) from Drosophila melanogaster (Fruit fly).